The following is a 244-amino-acid chain: Mitochondrial import inner membrane translocase subunit Tim21 (244 aa).

A mitochondrion-targeting transit peptide spans Met1–Ser18. Positions Thr65 to Ser96 are disordered. The segment covering Asp69 to Thr78 has biased composition (basic and acidic residues). A helical membrane pass occupies residues Ser107–Phe127.

The protein belongs to the TIM21 family. In terms of assembly, component of the TIM23 complex. Component of the MITRAC (mitochondrial translation regulation assembly intermediate of cytochrome c oxidase complex) complex, the core components of this complex being COA3/MITRAC12 and COX14. Interacts with COA3 and MT-CO1/COX1.

It is found in the mitochondrion membrane. Functionally, participates in the translocation of transit peptide-containing proteins across the mitochondrial inner membrane. Also required for assembly of mitochondrial respiratory chain complex I and complex IV as component of the MITRAC (mitochondrial translation regulation assembly intermediate of cytochrome c oxidase complex) complex. Probably shuttles between the presequence translocase and respiratory-chain assembly intermediates in a process that promotes incorporation of early nuclear-encoded subunits into these complexes. This chain is Mitochondrial import inner membrane translocase subunit Tim21 (Timm21), found in Mus musculus (Mouse).